Consider the following 285-residue polypeptide: Probable endonuclease 4 (285 aa).

The Zn(2+) site is built by histidine 69, histidine 109, glutamate 145, aspartate 179, histidine 182, histidine 216, aspartate 229, histidine 231, and glutamate 261.

The protein belongs to the AP endonuclease 2 family. Zn(2+) serves as cofactor.

It carries out the reaction Endonucleolytic cleavage to 5'-phosphooligonucleotide end-products.. In terms of biological role, endonuclease IV plays a role in DNA repair. It cleaves phosphodiester bonds at apurinic or apyrimidinic (AP) sites, generating a 3'-hydroxyl group and a 5'-terminal sugar phosphate. This is Probable endonuclease 4 from Shigella dysenteriae serotype 1 (strain Sd197).